We begin with the raw amino-acid sequence, 1438 residues long: Pyochelin synthetase PchE (1438 aa).

Positions 6–85 constitute a Carrier 1 domain; that stretch reads DSRTALRDWL…AWLDLLACAD (80 aa). S46 bears the O-(pantetheine 4'-phosphoryl)serine mark. The segment at 136 to 442 is condensation/cyclization; it reads RTRDVDPQRL…ARRQGQPRSA (307 aa). The segment at 563-950 is adenylation; it reads RAAEAPDADA…GRVDQQVKVR (388 aa). Residues 1350–1425 form the Carrier 2 domain; it reads EPLEAHEQAL…GLARHLQAQT (76 aa). S1385 carries the post-translational modification O-(pantetheine 4'-phosphoryl)serine.

It belongs to the NRP synthetase family. Requires pantetheine 4'-phosphate as cofactor.

The catalysed reaction is holo-[peptidyl-carrier protein] + L-cysteine + ATP = L-cysteinyl-[peptidyl-carrier protein] + AMP + diphosphate. Its pathway is siderophore biosynthesis. The protein operates within antifungal biosynthesis. Functionally, involved in the biosynthesis of the siderophore pyochelin. Accepts salicylate activated by PchD at the first peptidyl carrier domain (ArCP), and activates and fixes one molecule of cysteine at the second peptidyl carrier domain (PCP1) via a thioester linkage to the phosphopanthetheine moiety. Then catalyzes the condensation reaction between the salicylate bound to the first site and the cysteine bound to the second site, and the cyclization of the cysteine to form the salicyl-thiazolinyl-S-PCP1 intermediate at the second site. When this intermediate is released by the action of a thioesterase, it produces the antifungal antibiotic dihydroaeruginoic acid (Dha or hydroxyphenyl-thiazolinyl-carboxylate). This is Pyochelin synthetase PchE from Pseudomonas aeruginosa (strain UCBPP-PA14).